A 418-amino-acid chain; its full sequence is Chromo domain-containing protein rhino (418 aa).

A Chromo domain is found at 24 to 74 (YVVEKILGKRFVNGRPQVLVKWSGFPNENNTWEPLENVGNCMKLVSDFESE). Low complexity-rich tracts occupy residues 84–99 (AKSVGKSKSSPSSSGP) and 107–120 (SSSKKTQQHSKSVQ). Disordered stretches follow at residues 84–167 (AKSV…TDST) and 199–337 (PTKD…RCPR). The segment covering 131-143 (NQKKGKNIKKTAG) has biased composition (basic residues). A compositionally biased stretch (polar residues) spans 152-167 (PKTQMPSTSQVSTDST). Positions 218–228 (RLIEFPQREDA) are enriched in basic and acidic residues. A compositionally biased stretch (low complexity) spans 258–275 (GESSSSMSLPTVSSTSSE). A compositionally biased stretch (basic and acidic residues) spans 276–285 (KSIKVTKSEP). Positions 353–418 (TKPFGVNRGL…FESLRIIVPK (66 aa)) are required for interaction with del/deadlock.

As to quaternary structure, homodimer in solution. Dimerization is essential for chromatin binding. Component of the Rhino-Deadlock-Cutoff (RDC) complex, composed of rhi/rhino, del/deadlock and cuff/cutoff. Interacts (via C-terminus) with del/deadlock (via N-terminus); this interaction is direct. Two copies of del/deadlock associate with each rhi/rhino dimer. Interacts with cuff/cutoff; this interaction is indirect and is mediated by del/deadlock. Interacts (via Chromo domain) with kipf/kipferl (via C2H2 type zinc finger 4). Interacts (via Chromo domain) with His3/histone H3 (via N-terminus di- or tri-methylated on 'Lys-10' (H3K9me2/3)); this interaction is direct. Two His3 N-terminal tails oriented anti-parallel to each other are required for dimer binding to His3. In terms of tissue distribution, female specific, expressed in both somatic and germline cells but highly enriched in ovaries. In the germarium of the developing oocyte expressed in germline stem cells, cystoblasts and developing germline cysts. Expressed in nurse cells in the germarium and egg chamber.

Its subcellular location is the nucleus. The protein localises to the chromosome. Functionally, involved in piRNA (piwi-interacting RNA)-mediated transposon repression. May be involved in formation of the perinuclear nuage, a subcellular structure implicated in RNA processing that may be involved in transposon RNA surveillance and silencing. Required for ping-pong amplification during piRNA biogenesis, probably by promoting transcription of piRNA precursors. As part of the Rhino-Deadlock-Cutoff (RDC) Complex associates with, and drives non-canonical transcription of germline specific dual-strand piRNA clusters 80F, 38C and 42AB, but not single-stranded piRNA cluster 20A. Induction of piRNA expression is potentially achieved through a mechanism that prevents transcriptional termination and leads to readthrough from flanking transcription units. Recruited to specific chromatin regions by a combination of H3K9me2/3 histone methylation and differentially expressed sequence-specific recruitment factors. This association may involve direct interaction with DNA. Associates with chromatin upon exposure to homologous piRNA and facilitates transcriptional read-through. As part of the RDC complex, involved in suppression of splicing. In ovaries, recruitment to specific heterochromatin clusters is nucleated and stabilized by kipf/kipferl. During oogenesis, involved in axis specification and may regulate chromosome condensation at the onset of a mitotic-like phase that occurs during nurse cell chromosome duplication. Involved in the distribution of mRNAs for proteins that play a role in anterior-posterior and dorsal-ventral axes specification during development of the oocyte, including grk/gurken, osk/oskar and vas/vasa. Mitigates meiotic double strand breaks and interacts with DNA damage signaling to mediate axis specification. This chain is Chromo domain-containing protein rhino, found in Drosophila melanogaster (Fruit fly).